A 143-amino-acid polypeptide reads, in one-letter code: MANAASGMAVHDDCKLKFLELKAKRTYRFIIYKIEEKQKEVVVEKLGEPTESYEDFTAGLPADECRYAVYDFDFMTKENHQKSRIFFIAWSPDTARVRSKMIYASSKDRFKRELDGIQVELQATDPTEMGLDVFRSRAGGIEC.

One can recognise an ADF-H domain in the interval 5 to 139 (ASGMAVHDDC…GLDVFRSRAG (135 aa)).

The protein belongs to the actin-binding proteins ADF family.

In terms of biological role, actin-depolymerizing protein. Severs actin filaments (F-actin) and binds to actin monomers. In Petunia hybrida (Petunia), this protein is Actin-depolymerizing factor 2 (ADF2).